Reading from the N-terminus, the 131-residue chain is Small ribosomal subunit protein uS8 (131 aa).

It belongs to the universal ribosomal protein uS8 family. In terms of assembly, part of the 30S ribosomal subunit. Contacts proteins S5 and S12.

Its function is as follows. One of the primary rRNA binding proteins, it binds directly to 16S rRNA central domain where it helps coordinate assembly of the platform of the 30S subunit. This Alkalilimnicola ehrlichii (strain ATCC BAA-1101 / DSM 17681 / MLHE-1) protein is Small ribosomal subunit protein uS8.